A 201-amino-acid polypeptide reads, in one-letter code: Small ribosomal subunit protein uS4 (201 aa).

The S4 RNA-binding domain maps to A93 to D153.

Belongs to the universal ribosomal protein uS4 family. In terms of assembly, part of the 30S ribosomal subunit. Contacts protein S5. The interaction surface between S4 and S5 is involved in control of translational fidelity.

Functionally, one of the primary rRNA binding proteins, it binds directly to 16S rRNA where it nucleates assembly of the body of the 30S subunit. Its function is as follows. With S5 and S12 plays an important role in translational accuracy. This chain is Small ribosomal subunit protein uS4, found in Flavobacterium psychrophilum (strain ATCC 49511 / DSM 21280 / CIP 103535 / JIP02/86).